The primary structure comprises 410 residues: Peptidase T (410 aa).

Zn(2+) is bound at residue histidine 79. Residue aspartate 81 is part of the active site. Aspartate 142 lines the Zn(2+) pocket. Glutamate 176 functions as the Proton acceptor in the catalytic mechanism. The Zn(2+) site is built by glutamate 177, aspartate 199, and histidine 381.

Belongs to the peptidase M20B family. Zn(2+) is required as a cofactor.

The protein localises to the cytoplasm. It catalyses the reaction Release of the N-terminal residue from a tripeptide.. In terms of biological role, cleaves the N-terminal amino acid of tripeptides. The protein is Peptidase T of Listeria monocytogenes serotype 4b (strain F2365).